The chain runs to 308 residues: Cell division protein ZipA (308 aa).

Residues 1–5 (MQELR) lie on the Periplasmic side of the membrane. The chain crosses the membrane as a helical span at residues 6–26 (LVLILVGALAIAALLFHGLWT). Residues 27–308 (SRKETSSKFG…YKQRVKVFCN (282 aa)) are Cytoplasmic-facing. The interval 43–90 (FDSESEDEQPTPARGFEQPKESVVDVRQERKEPAFGRDEPNLSQDPLF) is disordered. The segment covering 59 to 82 (EQPKESVVDVRQERKEPAFGRDEP) has biased composition (basic and acidic residues).

It belongs to the ZipA family. In terms of assembly, interacts with FtsZ via their C-terminal domains.

The protein resides in the cell inner membrane. In terms of biological role, essential cell division protein that stabilizes the FtsZ protofilaments by cross-linking them and that serves as a cytoplasmic membrane anchor for the Z ring. Also required for the recruitment to the septal ring of downstream cell division proteins. In Aliivibrio salmonicida (strain LFI1238) (Vibrio salmonicida (strain LFI1238)), this protein is Cell division protein ZipA.